The primary structure comprises 151 residues: FAD synthase (151 aa).

ATP-binding positions include 21-22 (TF), 26-29 (HPGH), and D104.

The protein belongs to the archaeal FAD synthase family. In terms of assembly, homodimer. The cofactor is a divalent metal cation.

It carries out the reaction FMN + ATP + H(+) = FAD + diphosphate. The protein operates within cofactor biosynthesis; FAD biosynthesis; FAD from FMN: step 1/1. Its function is as follows. Catalyzes the transfer of the AMP portion of ATP to flavin mononucleotide (FMN) to produce flavin adenine dinucleotide (FAD) coenzyme. This is FAD synthase from Methanosarcina acetivorans (strain ATCC 35395 / DSM 2834 / JCM 12185 / C2A).